We begin with the raw amino-acid sequence, 314 residues long: Nodulation protein D 1 (314 aa).

One can recognise an HTH lysR-type domain in the interval 6–63 (LDLNLLVALDALMTERNLTAAARSINLSQPAMSAAVGRLRTYFNDDLFTMVGRELVPT). The segment at residues 23-42 (LTAAARSINLSQPAMSAAVG) is a DNA-binding region (H-T-H motif).

The protein belongs to the LysR transcriptional regulatory family.

Its function is as follows. NodD regulates the expression of the nodABCFE genes which encode other nodulation proteins. NodD is also a negative regulator of its own expression. Binds flavonoids as inducers. The sequence is that of Nodulation protein D 1 (nodD1) from Rhizobium leguminosarum bv. phaseoli.